The sequence spans 59 residues: Small ribosomal subunit protein bS21 (59 aa).

The segment at 35-59 (REHYEKPSVKKKKKSEAAKRKKRNF) is disordered. The span at 43–59 (VKKKKKSEAAKRKKRNF) shows a compositional bias: basic residues.

This sequence belongs to the bacterial ribosomal protein bS21 family.

The protein is Small ribosomal subunit protein bS21 of Finegoldia magna (strain ATCC 29328 / DSM 20472 / WAL 2508) (Peptostreptococcus magnus).